The sequence spans 64 residues: Tracheal antimicrobial peptide (64 aa).

Residues 1 to 26 (MRLHHLLLALLFLVLSAWSGFTQGVG) form the signal peptide. 3 disulfides stabilise this stretch: Cys31/Cys60, Cys38/Cys53, and Cys43/Cys61.

Belongs to the beta-defensin family. LAP/TAP subfamily. As to expression, tracheal epithelium.

It localises to the secreted. Its function is as follows. Has antibacterial activity in vitro against Escherichia coli, Staphylococcus aureus, Klebsiella pneumonia, and Pseudomonas aeruginosa. In addition, the peptide is active against Candida albicans, indicating a broad spectrum of activity. This chain is Tracheal antimicrobial peptide, found in Bos taurus (Bovine).